Consider the following 221-residue polypeptide: UPF0502 protein PSPA7_1674 (221 aa).

The protein belongs to the UPF0502 family.

This chain is UPF0502 protein PSPA7_1674, found in Pseudomonas paraeruginosa (strain DSM 24068 / PA7) (Pseudomonas aeruginosa (strain PA7)).